Reading from the N-terminus, the 302-residue chain is NAD kinase 2 (302 aa).

The active-site Proton acceptor is the Asp78. NAD(+)-binding positions include 78–79 (DG), 152–153 (NE), Asp182, and 193–198 (TAYSLS).

It belongs to the NAD kinase family. The cofactor is a divalent metal cation.

The protein localises to the cytoplasm. It catalyses the reaction NAD(+) + ATP = ADP + NADP(+) + H(+). Involved in the regulation of the intracellular balance of NAD and NADP, and is a key enzyme in the biosynthesis of NADP. Catalyzes specifically the phosphorylation on 2'-hydroxyl of the adenosine moiety of NAD to yield NADP. The chain is NAD kinase 2 from Prochlorococcus marinus (strain NATL2A).